A 205-amino-acid chain; its full sequence is Cbp/p300-interacting transactivator 3 (205 aa).

It belongs to the CITED family.

Its subcellular location is the nucleus. Functionally, acts as a transcriptional coactivator. Enhances estrogen-dependent transactivation mediated by estrogen receptors. This chain is Cbp/p300-interacting transactivator 3 (CITED3), found in Gallus gallus (Chicken).